Here is a 282-residue protein sequence, read N- to C-terminus: ATP synthase gamma chain (282 aa).

The protein belongs to the ATPase gamma chain family. In terms of assembly, F-type ATPases have 2 components, CF(1) - the catalytic core - and CF(0) - the membrane proton channel. CF(1) has five subunits: alpha(3), beta(3), gamma(1), delta(1), epsilon(1). CF(0) has three main subunits: a, b and c. In this bacterium the a and b subunits are transcribed but do not seem to be translated, thus the ATP synthase consists of the alpha, beta, gamma, delta, epsilon and c subunits.

The protein localises to the cell membrane. Its function is as follows. Produces ATP from ADP in the presence of a proton gradient across the membrane. The gamma chain is believed to be important in regulating ATPase activity and the flow of protons through the CF(0) complex. The protein is ATP synthase gamma chain of Moorella thermoacetica (strain ATCC 39073 / JCM 9320).